Reading from the N-terminus, the 672-residue chain is Hydrogenase-4 component B (672 aa).

At 1 to 5 (MDALQ) the chain is on the periplasmic side. A helical transmembrane segment spans residues 6 to 26 (LLTWSLILYLFASLASLFLLG). Residues 27–30 (LDRL) are Cytoplasmic-facing. A helical membrane pass occupies residues 31–51 (AIKLSGITSLVGGVIGIISGI). The Periplasmic portion of the chain corresponds to 52 to 79 (TQLHAGVTLVARFAPPFEFADLTLRMDS). Residues 80 to 100 (LSAFMVLVISLLVVVCSLYSL) form a helical membrane-spanning segment. The Cytoplasmic portion of the chain corresponds to 101-119 (TYMREYEGKGAAAMGFFMN). The chain crosses the membrane as a helical span at residues 120–140 (IFIASMVALLVMDNAFWFIVL). Over 141–164 (FEMMSLSSWFLVIARQDKTSINAG) the chain is Periplasmic. Residues 165–185 (MLYFFIAHAGSVLIMIAFLLM) form a helical membrane-spanning segment. Residues 186–199 (GRESGSLDFASFRT) are Cytoplasmic-facing. Residues 200–220 (LSLSPGLASAVFLLAFFGFGA) form a helical membrane-spanning segment. Over 221–242 (KAGMMPLHSWLPRAHPAAPSHA) the chain is Periplasmic. The chain crosses the membrane as a helical span at residues 243-263 (SALMSGVMVKIGIFGILKVAM). Topologically, residues 264 to 272 (DLLAQTGLP) are cytoplasmic. The chain crosses the membrane as a helical span at residues 273–293 (LWWGILVMAIGAISALLGVLY). Residues 294 to 311 (ALAEQDIKRLLAWSTVEN) lie on the Periplasmic side of the membrane. A helical membrane pass occupies residues 312 to 332 (VGIILLAVGVAMVGLSLHDPL). The Cytoplasmic segment spans residues 333–342 (LTVVGLLGAL). A helical membrane pass occupies residues 343–363 (FHLLNHALFKGLLFLGAGAII). The Periplasmic portion of the chain corresponds to 364–384 (SRLHTHDMEKMGALAKRMPWT). A helical membrane pass occupies residues 385–405 (AAACLIGCLAISAIPPLNGFI). Residues 406–427 (SEWYTWQSLFSLSRVEAVALQL) lie on the Cytoplasmic side of the membrane. Residues 428–448 (AGPIAMVMLAVTGGLAVMCFV) traverse the membrane as a helical segment. The Periplasmic portion of the chain corresponds to 449–474 (KMYGITFCGAPRSTHAEEAQEVPNTM). The helical transmembrane segment at 475–495 (IVAMLLLAALCVLIALSASWL) threads the bilayer. Over 496-504 (APKIMHIAH) the chain is Cytoplasmic. The helical transmembrane segment at 505-525 (AFTNTPPATVASGIALVPGTF) threads the bilayer. Residues 526–531 (HTQVTP) are Periplasmic-facing. Residues 532–552 (SLLLLLLLAMPLLPGLYWLWC) traverse the membrane as a helical segment. Residues 553 to 651 (RSRRAAFRRT…KEIQHLQSGD (99 aa)) are Cytoplasmic-facing. Residues 652–672 (FRLYCLYVVAALVVLLIAIAV) form a helical membrane-spanning segment.

The protein belongs to the complex I subunit 5 family.

It is found in the cell inner membrane. Possible component of hydrogenase 4. This Escherichia coli (strain K12) protein is Hydrogenase-4 component B.